Here is a 632-residue protein sequence, read N- to C-terminus: Palmitoyltransferase ZDHHC17 (632 aa).

Residues 1-304 (MQREEGFNTK…LKADKEFRQK (304 aa)) are Cytoplasmic-facing. The tract at residues 11–305 (MADGPDEYET…KADKEFRQKV (295 aa)) is necessary and sufficient for interaction with DNAJC5 and SNAP25. ANK repeat units lie at residues 51–86 (THIDDYSTWDIVKATQYGIYERCRELVEAGYDVRQP), 89–118 (ENVTLLHWAAINNRIDLVKYYISKGAIVDQ), 123–152 (LNSTPLHWATRQGHLSMVVQLMKYGADPSL), 156–185 (EGCSCIHLAAQFGHTSIVAYLIAKGQDVDM), 189–219 (NGMTPLMWAAYRTHSVDPTRLLLTFNVSVNL), 224–253 (HKNTALHWAVLAGNTTVISLLLEAGGNVDA), and 257–286 (KGESALDLAKQRKNVWMINHLQEARQAKGY). Transmembrane regions (helical) follow at residues 305-325 (VMLGTPFLVIWLVGFIADLDI) and 326-346 (DSWLIKGLMYGGVWATVQFLS). Residues 347–357 (KSFFDHSMHSA) are Cytoplasmic-facing. Residues 358–378 (LPLGIYLATKFWMYVTWFFWF) traverse the membrane as a helical segment. At 379-381 (WND) the chain is on the lumenal side. The chain crosses the membrane as a helical span at residues 382–402 (LNFLFIHLPFLANSVALFYNF). Residues 403–480 (GKSWKSDPGI…GNCVGAGNHR (78 aa)) are Cytoplasmic-facing. One can recognise a DHHC domain in the interval 437–487 (IFCSTCLIRKPVRSKHCGVCNRCIAKFDHHCPWVGNCVGAGNHRYFMGYLF). Cysteine 467 (S-palmitoyl cysteine intermediate) is an active-site residue. The chain crosses the membrane as a helical span at residues 481 to 501 (YFMGYLFFLLFMICWMIYGCV). At 502-529 (SYWGLHCETTYTKDGFWTYITQIATCSP) the chain is on the lumenal side. A helical transmembrane segment spans residues 530-550 (WMFWMFLNSVFHFLWVAVLLM). Residues 551-632 (CQLYQITCLG…QISGSGYQLV (82 aa)) are Cytoplasmic-facing.

This sequence belongs to the DHHC palmitoyltransferase family. AKR/ZDHHC17 subfamily. As to quaternary structure, interacts (via ANK repeats) with numerous proteins (via the consensus sequence motif [VIAP]-[VIT]-x-x-Q-P). Interacts (via ANK repeats) with CLIP3. Interacts (via ANK repeats) with HTT. Interacts (via ANK repeats) with DNAJC5 (via C-terminus). Interacts (via ANK repeats) with MAP6. Interacts (via ANK repeats) with SNAP23. Interacts (via ANK repeats) with SNAP25. Interacts (via ANK repeats) with EVL. Interacts with SPRED1 and SPRED3. Interacts with GPM6A and OPTN. May interact (via ANK repeats) with SPRED2. May interact with NTRK1; may regulate its localization and function. In terms of processing, autopalmitoylated. Autopalmitoylation has a regulatory role in ZDHHC17-mediated Mg(2+) transport. As to expression, expressed in liver, testis, kidney, heart, pancreas and brain. Highest expression was seen in the brain. Localized predominantly in the perinuclear regions of neurons from the cortex, striatum and hippocampus. Colocalized with HTT in the medium spiny neurons of the striatum and the spiny neurons that project into the globus pallidus.

The protein resides in the golgi apparatus membrane. It localises to the cytoplasmic vesicle membrane. The protein localises to the presynaptic cell membrane. The catalysed reaction is L-cysteinyl-[protein] + hexadecanoyl-CoA = S-hexadecanoyl-L-cysteinyl-[protein] + CoA. It catalyses the reaction L-cysteinyl-[protein] + tetradecanoyl-CoA = S-tetradecanoyl-L-cysteinyl-[protein] + CoA. It carries out the reaction L-cysteinyl-[protein] + octadecanoyl-CoA = S-octadecanoyl-L-cysteinyl-[protein] + CoA. In terms of biological role, palmitoyltransferase that catalyzes the addition of palmitate onto various protein substrates and is involved in a variety of cellular processes. Has no stringent fatty acid selectivity and in addition to palmitate can also transfer onto target proteins myristate from tetradecanoyl-CoA and stearate from octadecanoyl-CoA. Palmitoyltransferase specific for a subset of neuronal proteins, including SNAP25, DLG4/PSD95, GAD2, SYT1 and HTT. Also palmitoylates neuronal protein GPM6A as well as SPRED1 and SPRED3. Could also play a role in axonogenesis through the regulation of NTRK1 and the downstream ERK1/ERK2 signaling cascade. May be involved in the sorting or targeting of critical proteins involved in the initiating events of endocytosis at the plasma membrane. May play a role in Mg(2+) transport. Could also palmitoylate DNAJC5 and regulate its localization to the Golgi membrane. Palmitoylates CASP6, thereby preventing its dimerization and subsequent activation. In Mus musculus (Mouse), this protein is Palmitoyltransferase ZDHHC17.